We begin with the raw amino-acid sequence, 585 residues long: Bifunctional purine biosynthesis protein ade10 (585 aa).

In terms of domain architecture, MGS-like spans 1 to 142 (MYALLSVYDK…KNHARVTILS (142 aa)). Residues 30–33 (SGGT), 60–63 (RVKT), 97–98 (CN), and 121–122 (DI) contribute to the IMP site. Lys-133 serves as the catalytic Proton donor/acceptor; for FAICAR cyclization activity. 5-amino-1-(5-phospho-beta-D-ribosyl)imidazole-4-carboxamide-binding positions include 200 to 201 (RY), His-260, Gly-308, Asp-331, Asn-423, and Arg-443. His-260 acts as the Proton acceptor; for AICAR formyltransferase activity in catalysis. Ile-444 is a binding site for (6R)-10-formyltetrahydrofolate. Phe-534 is a 5-amino-1-(5-phospho-beta-D-ribosyl)imidazole-4-carboxamide binding site. (6R)-10-formyltetrahydrofolate is bound by residues Asp-539 and 558-559 (SV). Position 581 (Arg-581) interacts with 5-amino-1-(5-phospho-beta-D-ribosyl)imidazole-4-carboxamide.

Belongs to the PurH family. Homodimer.

It is found in the cytoplasm. It localises to the cytosol. It catalyses the reaction (6R)-10-formyltetrahydrofolate + 5-amino-1-(5-phospho-beta-D-ribosyl)imidazole-4-carboxamide = 5-formamido-1-(5-phospho-D-ribosyl)imidazole-4-carboxamide + (6S)-5,6,7,8-tetrahydrofolate. It carries out the reaction IMP + H2O = 5-formamido-1-(5-phospho-D-ribosyl)imidazole-4-carboxamide. Its pathway is purine metabolism; IMP biosynthesis via de novo pathway; 5-formamido-1-(5-phospho-D-ribosyl)imidazole-4-carboxamide from 5-amino-1-(5-phospho-D-ribosyl)imidazole-4-carboxamide (10-formyl THF route): step 1/1. The protein operates within purine metabolism; IMP biosynthesis via de novo pathway; IMP from 5-formamido-1-(5-phospho-D-ribosyl)imidazole-4-carboxamide: step 1/1. Its function is as follows. Bifunctional enzyme that catalyzes the last two steps of purine biosynthesis. Acts as a transformylase that incorporates a formyl group to the AMP analog AICAR (5-amino-1-(5-phospho-beta-D-ribosyl)imidazole-4-carboxamide) to produce the intermediate formyl-AICAR (FAICAR). Also catalyzes the cyclization of FAICAR to IMP. The sequence is that of Bifunctional purine biosynthesis protein ade10 (ade10) from Schizosaccharomyces pombe (strain 972 / ATCC 24843) (Fission yeast).